A 484-amino-acid chain; its full sequence is Protein nucleotidyltransferase YdiU (484 aa).

ATP contacts are provided by G81, G83, R84, K103, D115, G116, R166, and R173. D244 functions as the Proton acceptor in the catalytic mechanism. The Mg(2+) site is built by N245 and D254. ATP is bound at residue D254.

Belongs to the SELO family. The cofactor is Mg(2+). Mn(2+) serves as cofactor.

It carries out the reaction L-seryl-[protein] + ATP = 3-O-(5'-adenylyl)-L-seryl-[protein] + diphosphate. It catalyses the reaction L-threonyl-[protein] + ATP = 3-O-(5'-adenylyl)-L-threonyl-[protein] + diphosphate. The catalysed reaction is L-tyrosyl-[protein] + ATP = O-(5'-adenylyl)-L-tyrosyl-[protein] + diphosphate. The enzyme catalyses L-histidyl-[protein] + UTP = N(tele)-(5'-uridylyl)-L-histidyl-[protein] + diphosphate. It carries out the reaction L-seryl-[protein] + UTP = O-(5'-uridylyl)-L-seryl-[protein] + diphosphate. It catalyses the reaction L-tyrosyl-[protein] + UTP = O-(5'-uridylyl)-L-tyrosyl-[protein] + diphosphate. Its function is as follows. Nucleotidyltransferase involved in the post-translational modification of proteins. It can catalyze the addition of adenosine monophosphate (AMP) or uridine monophosphate (UMP) to a protein, resulting in modifications known as AMPylation and UMPylation. This chain is Protein nucleotidyltransferase YdiU, found in Shewanella baltica (strain OS155 / ATCC BAA-1091).